Reading from the N-terminus, the 414-residue chain is MYQRNILVEQTDPEVWAAIQAEDRRQEEHIELIASENYASPAVMAAQGSQLTNKYAEGYPGKRYYGGCENVDVIEQLAIDRIKQLFGAEAANVQPNSGSQANQAVLMAFLKPGDTILGMSLAEGGHLTHGMPLNMSGKWFNVVSYGLNDKEEIDYDALEAKAREHKPKLIIAGASAYALRIDFERFAKIAKEVGAIFWVDIAHYAGLVVAGEYPNPVPFADVVTSTTHKSLRGPRGGIILMKAEHEKAINSAIFPGLQGGPLEHVIAAKAVAFKEALSPEFKQYQQQVTKNAKVFAETLIQRGLRIVSGRTESHVMLVDLRAKGITGKEAEAALGKAHITINKNAIPNDPEKPMVTSGIRVGTPAITTRGFKEEETRLTANLVADVLDNPHDEANLEAVRAKVHALTSRFPVYR.

Residues Leu121 and 125 to 127 (GHL) each bind (6S)-5,6,7,8-tetrahydrofolate. Lys229 bears the N6-(pyridoxal phosphate)lysine mark.

It belongs to the SHMT family. As to quaternary structure, homodimer. Pyridoxal 5'-phosphate is required as a cofactor.

Its subcellular location is the cytoplasm. It carries out the reaction (6R)-5,10-methylene-5,6,7,8-tetrahydrofolate + glycine + H2O = (6S)-5,6,7,8-tetrahydrofolate + L-serine. It participates in one-carbon metabolism; tetrahydrofolate interconversion. The protein operates within amino-acid biosynthesis; glycine biosynthesis; glycine from L-serine: step 1/1. Its function is as follows. Catalyzes the reversible interconversion of serine and glycine with tetrahydrofolate (THF) serving as the one-carbon carrier. This reaction serves as the major source of one-carbon groups required for the biosynthesis of purines, thymidylate, methionine, and other important biomolecules. Also exhibits THF-independent aldolase activity toward beta-hydroxyamino acids, producing glycine and aldehydes, via a retro-aldol mechanism. The chain is Serine hydroxymethyltransferase from Acidovorax ebreus (strain TPSY) (Diaphorobacter sp. (strain TPSY)).